The chain runs to 65 residues: Photosystem II reaction center protein J (65 aa).

Positions 1-17 are enriched in basic and acidic residues; the sequence is MSTKLKGPDGRIPDRLP. Positions 1–21 are disordered; sequence MSTKLKGPDGRIPDRLPDGSP. Residues 36–56 traverse the membrane as a helical segment; that stretch reads LWLVATVGGMAVLSVLGLFFF.

This sequence belongs to the PsbJ family. As to quaternary structure, PSII is composed of 1 copy each of membrane proteins PsbA, PsbB, PsbC, PsbD, PsbE, PsbF, PsbH, PsbI, PsbJ, PsbK, PsbL, PsbM, PsbT, PsbX, PsbY, Psb30/Ycf12, peripheral proteins PsbO, CyanoQ (PsbQ), PsbU, PsbV and a large number of cofactors. It forms dimeric complexes.

It localises to the cellular thylakoid membrane. Functionally, one of the components of the core complex of photosystem II (PSII). PSII is a light-driven water:plastoquinone oxidoreductase that uses light energy to abstract electrons from H(2)O, generating O(2) and a proton gradient subsequently used for ATP formation. It consists of a core antenna complex that captures photons, and an electron transfer chain that converts photonic excitation into a charge separation. This chain is Photosystem II reaction center protein J, found in Prochlorococcus marinus (strain MIT 9313).